The following is a 351-amino-acid chain: Heat-inducible transcription repressor HrcA (351 aa).

This sequence belongs to the HrcA family.

Its function is as follows. Negative regulator of class I heat shock genes (grpE-dnaK-dnaJ and groELS operons). Prevents heat-shock induction of these operons. This chain is Heat-inducible transcription repressor HrcA, found in Clostridium tetani (strain Massachusetts / E88).